Reading from the N-terminus, the 211-residue chain is Probable GTP-binding protein EngB (211 aa).

One can recognise an EngB-type G domain in the interval 21 to 197 (TAPEFAFLGR…WGEIHRVAAE (177 aa)). GTP contacts are provided by residues 29–36 (GRSNVGKS), 55–59 (GRTRA), 80–83 (DLPG), 147–150 (TKAD), and 176–178 (CSA). Serine 36 and threonine 57 together coordinate Mg(2+).

The protein belongs to the TRAFAC class TrmE-Era-EngA-EngB-Septin-like GTPase superfamily. EngB GTPase family. The cofactor is Mg(2+).

Its function is as follows. Necessary for normal cell division and for the maintenance of normal septation. In Acidobacterium capsulatum (strain ATCC 51196 / DSM 11244 / BCRC 80197 / JCM 7670 / NBRC 15755 / NCIMB 13165 / 161), this protein is Probable GTP-binding protein EngB.